A 262-amino-acid polypeptide reads, in one-letter code: Hydroxyethylthiazole kinase (262 aa).

Met50 lines the substrate pocket. Arg125 and Thr171 together coordinate ATP. Residue Gly198 participates in substrate binding.

It belongs to the Thz kinase family. Requires Mg(2+) as cofactor.

It catalyses the reaction 5-(2-hydroxyethyl)-4-methylthiazole + ATP = 4-methyl-5-(2-phosphooxyethyl)-thiazole + ADP + H(+). The protein operates within cofactor biosynthesis; thiamine diphosphate biosynthesis; 4-methyl-5-(2-phosphoethyl)-thiazole from 5-(2-hydroxyethyl)-4-methylthiazole: step 1/1. Its function is as follows. Catalyzes the phosphorylation of the hydroxyl group of 4-methyl-5-beta-hydroxyethylthiazole (THZ). This Shigella sonnei (strain Ss046) protein is Hydroxyethylthiazole kinase.